The primary structure comprises 247 residues: Carboxy-S-adenosyl-L-methionine synthase (247 aa).

Residues tyrosine 40, 65 to 67 (GAS), 90 to 91 (DN), 122 to 123 (DI), asparagine 137, and arginine 204 contribute to the S-adenosyl-L-methionine site.

Belongs to the class I-like SAM-binding methyltransferase superfamily. Cx-SAM synthase family. Homodimer.

The catalysed reaction is prephenate + S-adenosyl-L-methionine = carboxy-S-adenosyl-L-methionine + 3-phenylpyruvate + H2O. Functionally, catalyzes the conversion of S-adenosyl-L-methionine (SAM) to carboxy-S-adenosyl-L-methionine (Cx-SAM). The protein is Carboxy-S-adenosyl-L-methionine synthase of Pseudomonas entomophila (strain L48).